Reading from the N-terminus, the 321-residue chain is Glutaminase (321 aa).

S69, N120, E165, N172, Y196, Y248, and V266 together coordinate substrate.

Belongs to the glutaminase family. Homotetramer.

The enzyme catalyses L-glutamine + H2O = L-glutamate + NH4(+). The chain is Glutaminase from Bacteroides thetaiotaomicron (strain ATCC 29148 / DSM 2079 / JCM 5827 / CCUG 10774 / NCTC 10582 / VPI-5482 / E50).